Consider the following 242-residue polypeptide: Pyridoxine 5'-phosphate synthase (242 aa).

Residue N9 coordinates 3-amino-2-oxopropyl phosphate. D11–H12 is a 1-deoxy-D-xylulose 5-phosphate binding site. Position 20 (R20) interacts with 3-amino-2-oxopropyl phosphate. H45 functions as the Proton acceptor in the catalytic mechanism. 2 residues coordinate 1-deoxy-D-xylulose 5-phosphate: R47 and H52. The active-site Proton acceptor is the E72. Residue T102 participates in 1-deoxy-D-xylulose 5-phosphate binding. The active-site Proton donor is the H193. 3-amino-2-oxopropyl phosphate is bound by residues G194 and G215–H216.

Belongs to the PNP synthase family. Homooctamer; tetramer of dimers.

Its subcellular location is the cytoplasm. It catalyses the reaction 3-amino-2-oxopropyl phosphate + 1-deoxy-D-xylulose 5-phosphate = pyridoxine 5'-phosphate + phosphate + 2 H2O + H(+). Its pathway is cofactor biosynthesis; pyridoxine 5'-phosphate biosynthesis; pyridoxine 5'-phosphate from D-erythrose 4-phosphate: step 5/5. Catalyzes the complicated ring closure reaction between the two acyclic compounds 1-deoxy-D-xylulose-5-phosphate (DXP) and 3-amino-2-oxopropyl phosphate (1-amino-acetone-3-phosphate or AAP) to form pyridoxine 5'-phosphate (PNP) and inorganic phosphate. This is Pyridoxine 5'-phosphate synthase from Idiomarina loihiensis (strain ATCC BAA-735 / DSM 15497 / L2-TR).